The primary structure comprises 265 residues: 4-hydroxy-tetrahydrodipicolinate reductase (265 aa).

9 to 14 (GPRGRM) contributes to the NAD(+) binding site. Arginine 37 contributes to the NADP(+) binding site. Residues 98–100 (GTT) and 124–127 (APNF) contribute to the NAD(+) site. Histidine 154 (proton donor/acceptor) is an active-site residue. Position 155 (histidine 155) interacts with (S)-2,3,4,5-tetrahydrodipicolinate. Lysine 158 acts as the Proton donor in catalysis. 164 to 165 (GT) contributes to the (S)-2,3,4,5-tetrahydrodipicolinate binding site.

This sequence belongs to the DapB family.

The protein resides in the cytoplasm. The enzyme catalyses (S)-2,3,4,5-tetrahydrodipicolinate + NAD(+) + H2O = (2S,4S)-4-hydroxy-2,3,4,5-tetrahydrodipicolinate + NADH + H(+). It catalyses the reaction (S)-2,3,4,5-tetrahydrodipicolinate + NADP(+) + H2O = (2S,4S)-4-hydroxy-2,3,4,5-tetrahydrodipicolinate + NADPH + H(+). Its pathway is amino-acid biosynthesis; L-lysine biosynthesis via DAP pathway; (S)-tetrahydrodipicolinate from L-aspartate: step 4/4. Functionally, catalyzes the conversion of 4-hydroxy-tetrahydrodipicolinate (HTPA) to tetrahydrodipicolinate. This Geobacillus thermodenitrificans (strain NG80-2) protein is 4-hydroxy-tetrahydrodipicolinate reductase.